We begin with the raw amino-acid sequence, 556 residues long: Transcription factor IIIB 70 kDa subunit (556 aa).

The segment at 8–41 (SSRKCKNCGSTDFVRDISNTTNELICKVCGLVTE) adopts a TFIIB-type zinc-finger fold. Cys-12, Cys-15, Cys-33, and Cys-36 together coordinate Zn(2+). 2 tandem repeats follow at residues 98–174 (LKAV…TFLK) and 193–272 (IQHF…RLNE). The interval 98–272 (LKAVSYALNI…EETLQQRLNE (175 aa)) is interaction with TBP and with the Pol III subunit C34. Residues 284-556 (KEFRDDETEV…DAINGLFGQK (273 aa)) are interaction with TBP. Disordered regions lie at residues 287–309 (RDDE…SFDK) and 477–501 (ADLA…QSSA). Residues 295–309 (EGERSAESKPPSFDK) are compositionally biased toward basic and acidic residues. Residues 486 to 495 (LRKKRSKRTN) are compositionally biased toward basic residues.

The protein belongs to the TFIIB family. As to quaternary structure, TFIIIB comprises the TATA-binding protein (TBP), the B-related factor (BRF) and a 70 kDa polypeptide.

Its subcellular location is the nucleus. General activator of RNA polymerase III transcription. Interacts with TBP. Binds to Pol III subunit C34 and to the TAU135 component of TFIIIC. This chain is Transcription factor IIIB 70 kDa subunit (TDS4), found in Kluyveromyces lactis (strain ATCC 8585 / CBS 2359 / DSM 70799 / NBRC 1267 / NRRL Y-1140 / WM37) (Yeast).